The primary structure comprises 272 residues: Glutamate racemase (272 aa).

Substrate is bound by residues 10-11 (DS) and 42-43 (YG). Cys-74 functions as the Proton donor/acceptor in the catalytic mechanism. 75-76 (NT) is a binding site for substrate. The active-site Proton donor/acceptor is Cys-185. Residue 186–187 (TH) coordinates substrate.

It belongs to the aspartate/glutamate racemases family.

The catalysed reaction is L-glutamate = D-glutamate. It participates in cell wall biogenesis; peptidoglycan biosynthesis. Its function is as follows. Provides the (R)-glutamate required for cell wall biosynthesis. The polypeptide is Glutamate racemase (Bacillus velezensis (strain DSM 23117 / BGSC 10A6 / LMG 26770 / FZB42) (Bacillus amyloliquefaciens subsp. plantarum)).